We begin with the raw amino-acid sequence, 46 residues long: Defensin-like protein 2 (46 aa).

4 disulfides stabilise this stretch: cysteine 3–cysteine 46, cysteine 13–cysteine 33, cysteine 19–cysteine 40, and cysteine 23–cysteine 42.

As to quaternary structure, monomer. Present in seeds, cotyledons and leaves. Not found in roots or stems.

Its function is as follows. Has antibacterial activity against the Gram-positive bacterium S.aureus and the Gram-negative bacteria E.coli and P.syringae. Does not have antibacterial activity against the phytopathogenic bacteria R.solanacearum, Rhataybacter sp and Erwinia sp. Does not inhibit trypsin, chymotrypsin or alpha-amylases. This Vigna unguiculata (Cowpea) protein is Defensin-like protein 2.